Here is a 162-residue protein sequence, read N- to C-terminus: NADH-quinone oxidoreductase subunit C (162 aa).

Belongs to the complex I 30 kDa subunit family. In terms of assembly, NDH-1 is composed of 14 different subunits. Subunits NuoB, C, D, E, F, and G constitute the peripheral sector of the complex.

It is found in the cell inner membrane. The catalysed reaction is a quinone + NADH + 5 H(+)(in) = a quinol + NAD(+) + 4 H(+)(out). In terms of biological role, NDH-1 shuttles electrons from NADH, via FMN and iron-sulfur (Fe-S) centers, to quinones in the respiratory chain. The immediate electron acceptor for the enzyme in this species is believed to be ubiquinone. Couples the redox reaction to proton translocation (for every two electrons transferred, four hydrogen ions are translocated across the cytoplasmic membrane), and thus conserves the redox energy in a proton gradient. The sequence is that of NADH-quinone oxidoreductase subunit C from Trichlorobacter lovleyi (strain ATCC BAA-1151 / DSM 17278 / SZ) (Geobacter lovleyi).